A 621-amino-acid polypeptide reads, in one-letter code: Acetolactate synthase (621 aa).

The span at 1–19 (MSAPTRRPAPDAPGAAGIA) shows a compositional bias: low complexity. A disordered region spans residues 1–39 (MSAPTRRPAPDAPGAAGIAPAPPAPAAKPAAGKPKRIGP). E89 provides a ligand contact to thiamine diphosphate. FAD is bound by residues R190, 296–317 (HGTVAAVAALQRSDLLIALGTR), and 339–358 (DIDPAEIGKNRHADVPIVGD). Positions 432–512 (HDQMWAAQFI…IKVALINNGN (81 aa)) are thiamine pyrophosphate binding. Residues D483 and N510 each contribute to the Mg(2+) site.

Belongs to the TPP enzyme family. Mg(2+) is required as a cofactor. The cofactor is thiamine diphosphate.

It carries out the reaction 2 pyruvate + H(+) = (2S)-2-acetolactate + CO2. It participates in amino-acid biosynthesis; L-isoleucine biosynthesis; L-isoleucine from 2-oxobutanoate: step 1/4. The protein operates within amino-acid biosynthesis; L-valine biosynthesis; L-valine from pyruvate: step 1/4. The chain is Acetolactate synthase (ilvB) from Mycobacterium avium.